Consider the following 58-residue polypeptide: Large ribosomal subunit protein uL30 (58 aa).

This sequence belongs to the universal ribosomal protein uL30 family. In terms of assembly, part of the 50S ribosomal subunit.

This chain is Large ribosomal subunit protein uL30, found in Pseudomonas putida (strain W619).